Consider the following 153-residue polypeptide: Lysine-acyltransferase RtxC (153 aa).

The active site involves His32.

The protein belongs to the RTX toxin acyltransferase family.

Its subcellular location is the cytoplasm. It carries out the reaction a fatty acyl-[ACP] + L-lysyl-[protein] = N(6)-(fatty acyl)-L-lysyl-[protein] + holo-[ACP] + H(+). Its function is as follows. Catalyzes fatty acylation of the protoxin (RtxA) at internal lysine residues, thereby converting it to the active toxin. This is Lysine-acyltransferase RtxC (rtxC) from Vibrio cholerae serotype O1 (strain ATCC 39315 / El Tor Inaba N16961).